The sequence spans 363 residues: Chorismate synthase (363 aa).

Arg-48 and Arg-54 together coordinate NADP(+). Residues 125–127 (RSS), 237–238 (NA), Gly-277, 292–296 (KPTSS), and Arg-318 each bind FMN.

This sequence belongs to the chorismate synthase family. Homotetramer. FMNH2 serves as cofactor.

The enzyme catalyses 5-O-(1-carboxyvinyl)-3-phosphoshikimate = chorismate + phosphate. It participates in metabolic intermediate biosynthesis; chorismate biosynthesis; chorismate from D-erythrose 4-phosphate and phosphoenolpyruvate: step 7/7. Functionally, catalyzes the anti-1,4-elimination of the C-3 phosphate and the C-6 proR hydrogen from 5-enolpyruvylshikimate-3-phosphate (EPSP) to yield chorismate, which is the branch point compound that serves as the starting substrate for the three terminal pathways of aromatic amino acid biosynthesis. This reaction introduces a second double bond into the aromatic ring system. The sequence is that of Chorismate synthase from Pseudomonas syringae pv. syringae (strain B728a).